The primary structure comprises 202 residues: Probable GTP-binding protein EngB (202 aa).

The EngB-type G domain maps to 22–197 (VFPEYAFIGR…LDYIENISKE (176 aa)). Residues 30–37 (GRSNVGKS), 57–61 (GKTML), 75–78 (DLPG), 142–145 (TKAD), and 173–178 (YFISSS) each bind GTP. Mg(2+)-binding residues include serine 37 and threonine 59.

The protein belongs to the TRAFAC class TrmE-Era-EngA-EngB-Septin-like GTPase superfamily. EngB GTPase family. The cofactor is Mg(2+).

Its function is as follows. Necessary for normal cell division and for the maintenance of normal septation. In Bacteroides thetaiotaomicron (strain ATCC 29148 / DSM 2079 / JCM 5827 / CCUG 10774 / NCTC 10582 / VPI-5482 / E50), this protein is Probable GTP-binding protein EngB.